Here is a 61-residue protein sequence, read N- to C-terminus: Large ribosomal subunit protein bL32 (61 aa).

Basic residues predominate over residues methionine 1–arginine 16. The segment at methionine 1–serine 33 is disordered.

It belongs to the bacterial ribosomal protein bL32 family.

This chain is Large ribosomal subunit protein bL32, found in Allorhizobium ampelinum (strain ATCC BAA-846 / DSM 112012 / S4) (Agrobacterium vitis (strain S4)).